The following is a 71-amino-acid chain: Plasticin-C2 (71 aa).

The first 22 residues, 1–22 (MAFLKKSLLLVLFLALVPLSIC), serve as a signal peptide directing secretion. Positions 23-45 (EEEKREEEDEEKQEDDDQSENKR) are excised as a propeptide. A disordered region spans residues 25 to 46 (EKREEEDEEKQEDDDQSENKRG). A compositionally biased stretch (acidic residues) spans 26 to 40 (KREEEDEEKQEDDDQ). An Asparagine amide modification is found at Asn68. Positions 70–71 (ES) are excised as a propeptide.

It belongs to the frog skin active peptide (FSAP) family. Plasticin subfamily. Expressed by the skin glands.

The protein resides in the secreted. It localises to the target cell membrane. Its function is as follows. Neutral peptide with no antimicrobial activity. May act in synergy with cationic peptides by enhancing their activity. Has a moderate hemolytic activity. This chain is Plasticin-C2, found in Agalychnis callidryas (Red-eyed tree frog).